The following is a 305-amino-acid chain: Peroxisome assembly protein 26 (305 aa).

Residues 1–20 (MKSDSSTSAAPLRGLGGPLR) form a disordered region. Residues 1–246 (MKSDSSTSAA…RQLWDSAVSH (246 aa)) are Cytoplasmic-facing. The helical; Signal-anchor for type II membrane protein transmembrane segment at 247–267 (FFSLPFKKSLLAALILCLLVV) threads the bilayer. Topologically, residues 268 to 305 (RFDPASPSSLHFLYKLAQLFRWIRKAAFSRLYQLRIRD) are peroxisomal matrix.

The protein belongs to the peroxin-26 family. Interacts (via its cytoplasmic domain) with PEX6; interaction is direct and is ATP-dependent. Interacts with PEX1; interaction is indirect and is mediated via interaction with PEX6. In terms of tissue distribution, widely expressed. Highly expressed in kidney, liver, brain and skeletal muscles. Expressed at intermediate level in pancreas, placenta and heart. Weakly expressed in lung.

The protein resides in the peroxisome membrane. In terms of biological role, peroxisomal docking factor that anchors PEX1 and PEX6 to peroxisome membranes. PEX26 is therefore required for the formation of the PEX1-PEX6 AAA ATPase complex, a complex that mediates the extraction of the PEX5 receptor from peroxisomal membrane. This is Peroxisome assembly protein 26 from Homo sapiens (Human).